The chain runs to 481 residues: ATP synthase subunit beta, chloroplastic (481 aa).

162–169 lines the ATP pocket; sequence GGAGVGKT.

The protein belongs to the ATPase alpha/beta chains family. In terms of assembly, F-type ATPases have 2 components, F(1) - the catalytic core - and F(0) - the membrane proton channel. F(1) has five subunits: alpha(3), beta(3), gamma(1), delta(1), epsilon(1). F(0) has four main subunits: a(1), b(1), b'(1) and c(10-14). The alpha and beta chains form an alternating ring which encloses part of the gamma chain. F(1) is attached to F(0) by a central stalk formed by the gamma and epsilon chains, while a peripheral stalk is formed by the delta, b and b' chains.

Its subcellular location is the plastid. The protein localises to the chloroplast thylakoid membrane. The enzyme catalyses ATP + H2O + 4 H(+)(in) = ADP + phosphate + 5 H(+)(out). F(1)F(0) ATP synthase produces ATP from ADP in the presence of a proton or sodium gradient. F-type ATPases consist of two structural domains, F(1) containing the extramembraneous catalytic core and F(0) containing the membrane proton channel, linked together by a central stalk and a peripheral stalk. During catalysis, ATP synthesis in the catalytic domain of F(1) is coupled via a rotary mechanism of the central stalk subunits to proton translocation. Its function is as follows. Produces ATP from ADP in the presence of a proton gradient across the membrane. The catalytic sites are hosted primarily by the beta subunits. This chain is ATP synthase subunit beta, chloroplastic, found in Chlamydomonas reinhardtii (Chlamydomonas smithii).